The chain runs to 281 residues: Putative phosphoenolpyruvate synthase regulatory protein (281 aa).

161-168 (GVSRSGKT) contacts ADP.

It belongs to the pyruvate, phosphate/water dikinase regulatory protein family. PSRP subfamily.

It carries out the reaction [pyruvate, water dikinase] + ADP = [pyruvate, water dikinase]-phosphate + AMP + H(+). The enzyme catalyses [pyruvate, water dikinase]-phosphate + phosphate + H(+) = [pyruvate, water dikinase] + diphosphate. Functionally, bifunctional serine/threonine kinase and phosphorylase involved in the regulation of the phosphoenolpyruvate synthase (PEPS) by catalyzing its phosphorylation/dephosphorylation. The polypeptide is Putative phosphoenolpyruvate synthase regulatory protein (Herminiimonas arsenicoxydans).